Reading from the N-terminus, the 1103-residue chain is Ubiquitin carboxyl-terminal hydrolase 7 (1103 aa).

A compositionally biased stretch (low complexity) spans 1-11 (MNHQQQQQQQQ). Residues 1–40 (MNHQQQQQQQQKAGEQQLSEPEDMEMEAGDTDDPPRITQN) are disordered. The tract at residues 1–209 (MNHQQQQQQQ…APHGVAWDSK (209 aa)) is interaction with TSPYL5. A Phosphoserine modification is found at Ser-19. The span at 20-32 (EPEDMEMEAGDTD) shows a compositional bias: acidic residues. Phosphoserine is present on residues Ser-50 and Ser-54. Residues 54–209 (SNAEEDMEDD…APHGVAWDSK (156 aa)) form an interaction with p53/TP53 and MDM2 region. The MATH domain occupies 69-196 (EATFQFTVER…DDKVTFEVFV (128 aa)). The interval 71–206 (TFQFTVERFS…QADAPHGVAW (136 aa)) is necessary for nuclear localization. The region spanning 215-522 (VGLKNQGATC…NAYMLVYIRE (308 aa)) is the USP domain. Residue Cys-224 is the Nucleophile of the active site. Residue His-465 is the Proton acceptor of the active site. Lys-870 carries the N6-acetyllysine; alternate modification. A Glycyl lysine isopeptide (Lys-Gly) (interchain with G-Cter in SUMO2); alternate cross-link involves residue Lys-870. A Glycyl lysine isopeptide (Lys-Gly) (interchain with G-Cter in ubiquitin); alternate cross-link involves residue Lys-870. Lys-883 participates in a covalent cross-link: Glycyl lysine isopeptide (Lys-Gly) (interchain with G-Cter in SUMO2). Ser-964 carries the post-translational modification Phosphoserine. Residues Lys-1085 and Lys-1097 each carry the N6-acetyllysine modification.

This sequence belongs to the peptidase C19 family. As to quaternary structure, monomer. Homodimer. Part of a complex with DAXX, MDM2, RASSF1 and USP7. Part of a complex with DAXX, MDM2 and USP7. Interacts with MDM2; the interaction is independent of p53/TP53. Interacts with DAXX; the interaction is direct and independent of MDM2 and p53/TP53. Component of a complex composed of KMT2E, OGT and USP7; the complex stabilizes KMT2E, preventing KMT2E ubiquitination and proteasomal-mediated degradation. Interacts (via MATH domain) with KMT2E. Interacts with OGT. Interacts with FOXO4; the interaction is enhanced in presence of hydrogen peroxide and occurs independently of p53/TP53. Interacts with p53/TP53; the interaction is enhanced in response to DNA damage; the interaction is impaired by TSPYL5. Interacts with PTEN; the interaction is direct. Interacts with ATXN1 and the strength of interaction is influenced by the length of the poly-Gln region in ATXN1. A weaker interaction seen with mutants having longer poly-Gln regions. Interacts with KIAA1530/UVSSA. Interacts with MEX3C and antagonizes its ability to degrade mRNA. Interacts with DNMT1 and UHRF1. Interacts with FOXP3. Interacts (via MATH domain) with RNF220. Associated component of the Polycomb group (PcG) multiprotein PRC1-like complex. Interacts with EPOP. Interacts with OTUD4 and USP9X; the interaction is direct. Interacts with CRY2. Interacts with REST. Interacts with ERCC6. Part of a complex consisting of USP7, MAGEL2 and TRIM27; directly interacts with MAGEL2; directly interacts with TRIM27. In terms of processing, polyneddylated. Not sumoylated. Post-translationally, ubiquitinated at Lys-870. Polyubiquitinated. In terms of tissue distribution, strongly expressed in the testis, spleen and brain. Weakly expressed in the stomach, small intestine, skeletal muscle and uterus.

The protein localises to the nucleus. It localises to the cytoplasm. Its subcellular location is the PML body. It is found in the chromosome. It catalyses the reaction Thiol-dependent hydrolysis of ester, thioester, amide, peptide and isopeptide bonds formed by the C-terminal Gly of ubiquitin (a 76-residue protein attached to proteins as an intracellular targeting signal).. Functionally, hydrolase that deubiquitinates target proteins such as ARMC5, FOXO4, DEPTOR, KAT5, p53/TP53, MDM2, ERCC6, DNMT1, UHRF1, PTEN, KMT2E/MLL5 and DAXX. Together with DAXX, prevents MDM2 self-ubiquitination and enhances the E3 ligase activity of MDM2 towards p53/TP53, thereby promoting p53/TP53 ubiquitination and proteasomal degradation. Deubiquitinates p53/TP53, preventing degradation of p53/TP53, and enhances p53/TP53-dependent transcription regulation, cell growth repression and apoptosis. Deubiquitinates p53/TP53 and MDM2 and strongly stabilizes p53/TP53 even in the presence of excess MDM2, and also induces p53/TP53-dependent cell growth repression and apoptosis. Deubiquitination of FOXO4 in presence of hydrogen peroxide is not dependent on p53/TP53 and inhibits FOXO4-induced transcriptional activity. In association with DAXX, is involved in the deubiquitination and translocation of PTEN from the nucleus to the cytoplasm, both processes that are counteracted by PML. Deubiquitinates KMT2E preventing KMT2E proteasomal-mediated degradation. Involved in cell proliferation during early embryonic development. Involved in transcription-coupled nucleotide excision repair (TC-NER) in response to UV damage: recruited to DNA damage sites following interaction with KIAA1530/UVSSA and promotes deubiquitination of ERCC6, preventing UV-induced degradation of ERCC6. Involved in maintenance of DNA methylation via its interaction with UHRF1 and DNMT1: acts by mediating deubiquitination of UHRF1 and DNMT1, preventing their degradation and promoting DNA methylation by DNMT1. Deubiquitinates alkylation repair enzyme ALKBH3. OTUD4 recruits USP7 and USP9X to stabilize ALKBH3, thereby promoting the repair of alkylated DNA lesions. Acts as a chromatin regulator via its association with the Polycomb group (PcG) multiprotein PRC1-like complex; may act by deubiquitinating components of the PRC1-like complex. Able to mediate deubiquitination of histone H2B; it is however unsure whether this activity takes place in vivo. Exhibits a preference towards 'Lys-48'-linked ubiquitin chains. Increases regulatory T-cells (Treg) suppressive capacity by deubiquitinating and stabilizing transcription factor FOXP3 which is crucial for Treg cell function. Plays a role in the maintenance of the circadian clock periodicity via deubiquitination and stabilization of the CRY1 and CRY2 proteins. Deubiquitinates REST, thereby stabilizing REST and promoting the maintenance of neural progenitor cells. Deubiquitinates SIRT7, inhibiting SIRT7 histone deacetylase activity and regulating gluconeogenesis. Involved in the regulation of WASH-dependent actin polymerization at the surface of endosomes and the regulation of endosomal protein recycling. It maintains optimal WASH complex activity and precise F-actin levels via deubiquitination of TRIM27 and WASHC1. Mediates the deubiquitination of phosphorylated DEPTOR, promoting its stability and leading to decreased mTORC1 signaling. The protein is Ubiquitin carboxyl-terminal hydrolase 7 (Usp7) of Rattus norvegicus (Rat).